Consider the following 120-residue polypeptide: Ribonuclease P protein component (120 aa).

This sequence belongs to the RnpA family. Consists of a catalytic RNA component (M1 or rnpB) and a protein subunit.

The enzyme catalyses Endonucleolytic cleavage of RNA, removing 5'-extranucleotides from tRNA precursor.. Functionally, RNaseP catalyzes the removal of the 5'-leader sequence from pre-tRNA to produce the mature 5'-terminus. It can also cleave other RNA substrates such as 4.5S RNA. The protein component plays an auxiliary but essential role in vivo by binding to the 5'-leader sequence and broadening the substrate specificity of the ribozyme. The protein is Ribonuclease P protein component of Dehalococcoides mccartyi (strain CBDB1).